Consider the following 221-residue polypeptide: Ependymin-2 (221 aa).

The N-terminal stretch at 1-21 is a signal peptide; the sequence is MQDFAFAALSIWLCLGATALA. Residues asparagine 33, asparagine 73, and asparagine 97 are each glycosylated (N-linked (GlcNAc...) asparagine).

It belongs to the ependymin family. Binds calcium through the terminal sialic acids. EPDs are synthesized in the meninx and secreted in the cerebrospinal fluid.

It is found in the secreted. In terms of biological role, may play a role in neural plasticity. May be involved during axon regeneration. In Salmo salar (Atlantic salmon), this protein is Ependymin-2 (epd2).